The following is a 34-amino-acid chain: uncharacterized protein (34 aa).

This is an uncharacterized protein from Saccharomyces cerevisiae (strain ATCC 204508 / S288c) (Baker's yeast).